A 229-amino-acid polypeptide reads, in one-letter code: Octanoyltransferase (229 aa).

A BPL/LPL catalytic domain is found at 30–223 (PDTPDTIWLV…QLQQRAQAHP (194 aa)). Residues 69–76 (RGGQITYH), 141–143 (ALG), and 154–156 (GVS) contribute to the substrate site. Cys-172 functions as the Acyl-thioester intermediate in the catalytic mechanism.

Belongs to the LipB family.

It is found in the cytoplasm. It catalyses the reaction octanoyl-[ACP] + L-lysyl-[protein] = N(6)-octanoyl-L-lysyl-[protein] + holo-[ACP] + H(+). Its pathway is protein modification; protein lipoylation via endogenous pathway; protein N(6)-(lipoyl)lysine from octanoyl-[acyl-carrier-protein]: step 1/2. In terms of biological role, catalyzes the transfer of endogenously produced octanoic acid from octanoyl-acyl-carrier-protein onto the lipoyl domains of lipoate-dependent enzymes. Lipoyl-ACP can also act as a substrate although octanoyl-ACP is likely to be the physiological substrate. In Ralstonia pickettii (strain 12J), this protein is Octanoyltransferase.